We begin with the raw amino-acid sequence, 238 residues long: Lactate utilization protein A (238 aa).

It belongs to the LutA/YkgE family.

Functionally, is involved in L-lactate degradation and allows cells to grow with lactate as the sole carbon source. The sequence is that of Lactate utilization protein A from Anoxybacillus flavithermus (strain DSM 21510 / WK1).